A 356-amino-acid polypeptide reads, in one-letter code: Glutamine synthetase cytosolic isozyme (356 aa).

The GS beta-grasp domain maps to 19–99 (IIAEYIWIGG…VMCDAYTPAG (81 aa)). The segment at 38-66 (RTLPGPVTDPSQLPKWNYDGSSTGQAPGE) is disordered. The 251-residue stretch at 106-356 (KRHAAAKIFS…IADTTILWKP (251 aa)) folds into the GS catalytic domain.

It belongs to the glutamine synthetase family. In terms of assembly, homooctamer.

The protein localises to the cytoplasm. The enzyme catalyses L-glutamate + NH4(+) + ATP = L-glutamine + ADP + phosphate + H(+). The polypeptide is Glutamine synthetase cytosolic isozyme (Medicago sativa (Alfalfa)).